Consider the following 80-residue polypeptide: Small pacifastin protease inhibitor (80 aa).

A signal peptide spans Met-1–Ala-24. The propeptide occupies Glu-25–Lys-47. In terms of domain architecture, Pacifastin spans Thr-45–His-80. Disulfide bonds link Cys-48-Cys-63, Cys-58-Cys-77, and Cys-61-Cys-72.

The protein belongs to the protease inhibitor I19 family. In terms of tissue distribution, expressed in the venom apparatus. Low transcript levels are also detected in other tissues.

The protein localises to the secreted. Functionally, parasitic wasp protein that may interfere with the host immune response. The recombinant protein inhibits trypsin activity and prophenoloxidase (PPO) activation, an enzyme essential for both clotting and insect innate immune responses. It does not inhibit activity of chymotrypsin and protease K, and has no effect on phenoloxidase (PO) activity. This chain is Small pacifastin protease inhibitor, found in Nasonia vitripennis (Parasitic wasp).